The sequence spans 704 residues: Glycine--tRNA ligase beta subunit (704 aa).

Belongs to the class-II aminoacyl-tRNA synthetase family. As to quaternary structure, tetramer of two alpha and two beta subunits.

The protein localises to the cytoplasm. It carries out the reaction tRNA(Gly) + glycine + ATP = glycyl-tRNA(Gly) + AMP + diphosphate. The polypeptide is Glycine--tRNA ligase beta subunit (Rhizobium etli (strain CIAT 652)).